The following is a 413-amino-acid chain: PCI domain-containing protein 2 homolog (413 aa).

One can recognise a PCI domain in the interval 222-403 (VAYNYFLGRK…QKLVISKMNA (182 aa)).

Belongs to the CSN12 family.

The polypeptide is PCI domain-containing protein 2 homolog (Caenorhabditis elegans).